A 310-amino-acid polypeptide reads, in one-letter code: Homoserine kinase (310 aa).

An ATP-binding site is contributed by 85–95 (PKGLGLGSSGA).

Belongs to the GHMP kinase family. Homoserine kinase subfamily.

It is found in the cytoplasm. The catalysed reaction is L-homoserine + ATP = O-phospho-L-homoserine + ADP + H(+). The protein operates within amino-acid biosynthesis; L-threonine biosynthesis; L-threonine from L-aspartate: step 4/5. Functionally, catalyzes the ATP-dependent phosphorylation of L-homoserine to L-homoserine phosphate. This Thermoplasma acidophilum (strain ATCC 25905 / DSM 1728 / JCM 9062 / NBRC 15155 / AMRC-C165) protein is Homoserine kinase.